The chain runs to 293 residues: Elongation factor Ts (293 aa).

Residues 80–83 are involved in Mg(2+) ion dislocation from EF-Tu; it reads TDFV.

It belongs to the EF-Ts family.

It is found in the cytoplasm. Functionally, associates with the EF-Tu.GDP complex and induces the exchange of GDP to GTP. It remains bound to the aminoacyl-tRNA.EF-Tu.GTP complex up to the GTP hydrolysis stage on the ribosome. The polypeptide is Elongation factor Ts (Burkholderia multivorans (strain ATCC 17616 / 249)).